A 350-amino-acid polypeptide reads, in one-letter code: Biotin synthase (350 aa).

The 228-residue stretch at 42–269 folds into the Radical SAM core domain; that stretch reads NEVQVSTLCS…QSHVRLSAGR (228 aa). Residues C57, C61, and C64 each coordinate [4Fe-4S] cluster. The [2Fe-2S] cluster site is built by C101, C132, C192, and R264.

The protein belongs to the radical SAM superfamily. Biotin synthase family. Homodimer. Requires [4Fe-4S] cluster as cofactor. [2Fe-2S] cluster serves as cofactor.

The catalysed reaction is (4R,5S)-dethiobiotin + (sulfur carrier)-SH + 2 reduced [2Fe-2S]-[ferredoxin] + 2 S-adenosyl-L-methionine = (sulfur carrier)-H + biotin + 2 5'-deoxyadenosine + 2 L-methionine + 2 oxidized [2Fe-2S]-[ferredoxin]. The protein operates within cofactor biosynthesis; biotin biosynthesis; biotin from 7,8-diaminononanoate: step 2/2. Catalyzes the conversion of dethiobiotin (DTB) to biotin by the insertion of a sulfur atom into dethiobiotin via a radical-based mechanism. This Saccharophagus degradans (strain 2-40 / ATCC 43961 / DSM 17024) protein is Biotin synthase.